A 419-amino-acid chain; its full sequence is E3 ubiquitin-protein ligase RNF130 (419 aa).

An N-terminal signal peptide occupies residues 1-27 (MSGAARAGPARLAALALLTCSLWPTRA). At 28–194 (DNASQEYYTA…MPPKNFSRGS (167 aa)) the chain is on the extracellular side. Residues asparagine 29, asparagine 40, asparagine 112, asparagine 135, asparagine 172, and asparagine 189 are each glycosylated (N-linked (GlcNAc...) asparagine). Residues 105-176 (IALLQRGNCT…SYLEKNISVQ (72 aa)) form the PA domain. The chain crosses the membrane as a helical span at residues 195-217 (LVFVSISFIVLMIISSAWLIFYF). Residues 218–419 (IQKIRYTNAR…SLNANEVEWF (202 aa)) are Cytoplasmic-facing. An RING-type zinc finger spans residues 264–305 (CAVCIESYKQNDVVRVLPCKHVFHKSCVDPWLSEHCTCPMCK).

In terms of tissue distribution, expression is highest in liver, with lesser amounts in the lung, spleen, brain, heart, kidney and testis.

It is found in the membrane. The protein localises to the cytoplasm. It catalyses the reaction S-ubiquitinyl-[E2 ubiquitin-conjugating enzyme]-L-cysteine + [acceptor protein]-L-lysine = [E2 ubiquitin-conjugating enzyme]-L-cysteine + N(6)-ubiquitinyl-[acceptor protein]-L-lysine.. It functions in the pathway protein modification; protein ubiquitination. Acts as an E3 ubiquitin-protein ligase. May have a role during the programmed cell death of hematopoietic cells. The polypeptide is E3 ubiquitin-protein ligase RNF130 (Mus musculus (Mouse)).